Here is a 210-residue protein sequence, read N- to C-terminus: Inner membrane-spanning protein YciB (210 aa).

A run of 6 helical transmembrane segments spans residues 12 to 32, 53 to 73, 78 to 98, 115 to 135, 148 to 168, and 175 to 195; these read EVSP…FFFA, IFIA…ASWI, LPMM…LTLW, LFGA…GYVF, KLTI…EVIW, and FWVA…TLAQ.

This sequence belongs to the YciB family.

Its subcellular location is the cell inner membrane. Its function is as follows. Plays a role in cell envelope biogenesis, maintenance of cell envelope integrity and membrane homeostasis. This Rhizobium meliloti (strain 1021) (Ensifer meliloti) protein is Inner membrane-spanning protein YciB.